A 148-amino-acid chain; its full sequence is uncharacterized protein (148 aa).

The HTH asnC-type domain occupies 4-65 (LDKVDIQLVK…IPDLDKLGYM (62 aa)). The H-T-H motif DNA-binding region spans 23 to 42 (YRELAELMNTTRQRIARRIT).

This is an uncharacterized protein from Pyrococcus abyssi (strain GE5 / Orsay).